Here is a 120-residue protein sequence, read N- to C-terminus: NAD(P)H-quinone oxidoreductase subunit 3, chloroplastic (120 aa).

A run of 3 helical transmembrane segments spans residues 10–30, 64–84, and 89–109; these read FWAF…TSSL, MFAL…PWAM, and LGVL…IGLV.

Belongs to the complex I subunit 3 family. NDH is composed of at least 16 different subunits, 5 of which are encoded in the nucleus.

It localises to the plastid. Its subcellular location is the chloroplast thylakoid membrane. The catalysed reaction is a plastoquinone + NADH + (n+1) H(+)(in) = a plastoquinol + NAD(+) + n H(+)(out). It carries out the reaction a plastoquinone + NADPH + (n+1) H(+)(in) = a plastoquinol + NADP(+) + n H(+)(out). In terms of biological role, NDH shuttles electrons from NAD(P)H:plastoquinone, via FMN and iron-sulfur (Fe-S) centers, to quinones in the photosynthetic chain and possibly in a chloroplast respiratory chain. The immediate electron acceptor for the enzyme in this species is believed to be plastoquinone. Couples the redox reaction to proton translocation, and thus conserves the redox energy in a proton gradient. This chain is NAD(P)H-quinone oxidoreductase subunit 3, chloroplastic, found in Zygnema circumcarinatum (Green alga).